Reading from the N-terminus, the 118-residue chain is Cell division protein SepF (118 aa).

The segment at 1 to 12 (MGIMSKILGGGG) is important for localization in a ring-like structure at midcell.

Homodimer. Does not oligomerize. Interacts with FtsZ2.

It localises to the cytoplasm. In terms of biological role, involved in cell division. Probably acts as a membrane anchor for FstZ2, tethering its filaments to the division site. May be involved in septum closure. This is Cell division protein SepF from Haloferax volcanii (strain ATCC 29605 / DSM 3757 / JCM 8879 / NBRC 14742 / NCIMB 2012 / VKM B-1768 / DS2) (Halobacterium volcanii).